The sequence spans 394 residues: Phosphorylated adapter RNA export protein (394 aa).

The segment covering 1 to 18 (MALEVGDMEDGQLSDSDS) has biased composition (acidic residues). The interval 1–33 (MALEVGDMEDGQLSDSDSDMTVAPSDRPLQLPK) is disordered. An N-acetylalanine modification is found at alanine 2. The tract at residues 2–329 (ALEVGDMEDG…KAARKRRTQV (328 aa)) is necessary for interaction with CBP80. Residues serine 14, serine 16, serine 65, serine 66, serine 69, and serine 73 each carry the phosphoserine modification. The short motif at 81-84 (KRKR) is the Nuclear localization signal element. The segment at 83-111 (KRQKCFNPPPKPEPFQFGQSSQKPPVAGG) is disordered. The Nuclear export signal motif lies at 130–139 (VATELGILGM). The span at 183–193 (KKMGSKEEENG) shows a compositional bias: basic and acidic residues. Residues 183–211 (KKMGSKEEENGQGHLKRKRPVKDRLGNRP) form a disordered region. The Nuclear localization signal signature appears at 198–201 (KRKR). Serine 226 carries the phosphoserine modification. Positions 228–328 (EKVADEISFR…KKAARKRRTQ (101 aa)) are sufficient for poly U RNA-binding. A necessary for poly U RNA-binding and snRNA export region spans residues 279–287 (GSRRRTPGG). Threonine 296 bears the Phosphothreonine mark. Phosphoserine is present on residues serine 356 and serine 368.

Belongs to the PHAX family. Found in a U snRNA export complex with PHAX/RNUXA, NCBP1/CBP80, NCBP2/CBP20, RAN, XPO1 and m7G-capped RNA. Part of a precomplex with PHAX/RNUXA, NCBP1/CBP80, NCBP2/CBP20 and m7G-capped RNA. Interacts with NCBP1/CBP80. Found in a complex with snoRNA. Interacts with NCBP2/CBP20. Interacts with DDX39A; this interaction stimulates PHAX RNA binding activity. Post-translationally, phosphorylated in the nucleus. Dephosphorylated in the cytoplasm.

It localises to the nucleus. It is found in the nucleoplasm. Its subcellular location is the cajal body. The protein resides in the cytoplasm. In terms of biological role, a phosphoprotein adapter involved in the XPO1-mediated U snRNA export from the nucleus. Bridge components required for U snRNA export, the cap binding complex (CBC)-bound snRNA on the one hand and the GTPase Ran in its active GTP-bound form together with the export receptor XPO1 on the other. Its phosphorylation in the nucleus is required for U snRNA export complex assembly and export, while its dephosphorylation in the cytoplasm causes export complex disassembly. It is recycled back to the nucleus via the importin alpha/beta heterodimeric import receptor. The directionality of nuclear export is thought to be conferred by an asymmetric distribution of the GTP- and GDP-bound forms of Ran between the cytoplasm and nucleus. Its compartmentalized phosphorylation cycle may also contribute to the directionality of export. Binds strongly to m7G-capped U1 and U5 small nuclear RNAs (snRNAs) in a sequence-unspecific manner and phosphorylation-independent manner. Also plays a role in the biogenesis of U3 small nucleolar RNA (snoRNA). Involved in the U3 snoRNA transport from nucleoplasm to Cajal bodies. Binds strongly to m7G-capped U3, U8 and U13 precursor snoRNAs and weakly to trimethylated (TMG)-capped U3, U8 and U13 snoRNAs. Also binds to telomerase RNA. This Homo sapiens (Human) protein is Phosphorylated adapter RNA export protein (PHAX).